The following is a 47-amino-acid chain: MALINFDLLAELPLAYQAFAPTVDVLPLIPLFFFLLVFVWQAAVGFR.

A propeptide spanning residues 1-10 (MALINFDLLA) is cleaved from the precursor. A helical transmembrane segment spans residues 26–46 (LPLIPLFFFLLVFVWQAAVGF).

Belongs to the PsbK family. PSII is composed of 1 copy each of membrane proteins PsbA, PsbB, PsbC, PsbD, PsbE, PsbF, PsbH, PsbI, PsbJ, PsbK, PsbL, PsbM, PsbT, PsbX, PsbY, Psb30/Ycf12, peripheral proteins PsbO, CyanoQ (PsbQ), PsbU, PsbV and a large number of cofactors. It forms dimeric complexes.

Its subcellular location is the cellular thylakoid membrane. In terms of biological role, one of the components of the core complex of photosystem II (PSII). PSII is a light-driven water:plastoquinone oxidoreductase that uses light energy to abstract electrons from H(2)O, generating O(2) and a proton gradient subsequently used for ATP formation. It consists of a core antenna complex that captures photons, and an electron transfer chain that converts photonic excitation into a charge separation. The sequence is that of Photosystem II reaction center protein K from Prochlorococcus marinus (strain NATL2A).